Reading from the N-terminus, the 171-residue chain is Tetratricopeptide repeat protein 9C (171 aa).

TPR repeat units lie at residues alanine 8–leucine 41, threonine 72–asparagine 107, and alanine 108–aspartate 141.

This sequence belongs to the TTC9 family.

The protein is Tetratricopeptide repeat protein 9C (TTC9C) of Homo sapiens (Human).